Here is a 385-residue protein sequence, read N- to C-terminus: Glycerol-3-phosphate dehydrogenase [NAD(+)] 1 (385 aa).

Residues 29-34 (GSGNWG), phenylalanine 121, lysine 144, and alanine 177 each bind NAD(+). Lysine 144 serves as a coordination point for substrate. Lysine 232 functions as the Proton acceptor in the catalytic mechanism. NAD(+)-binding residues include arginine 296 and glutamine 325. 296–297 (RN) provides a ligand contact to substrate. Phosphoserine is present on serine 376. The residue at position 382 (threonine 382) is a Phosphothreonine.

Belongs to the NAD-dependent glycerol-3-phosphate dehydrogenase family.

The protein localises to the cytoplasm. The catalysed reaction is sn-glycerol 3-phosphate + NAD(+) = dihydroxyacetone phosphate + NADH + H(+). This Schizosaccharomyces pombe (strain 972 / ATCC 24843) (Fission yeast) protein is Glycerol-3-phosphate dehydrogenase [NAD(+)] 1 (gpd1).